The primary structure comprises 957 residues: Receptor-like protein 53 (957 aa).

The first 30 residues, 1–30 (MEGFWNSKSIIRITLSFIFLFICHFLDVLA), serve as a signal peptide directing secretion. The Extracellular segment spans residues 31-910 (APTRNLCRPE…EEEDEDLISW (880 aa)). N-linked (GlcNAc...) asparagine glycans are attached at residues Asn-78, Asn-114, Asn-143, Asn-167, and Asn-191. LRR repeat units lie at residues 120–143 (LHFLTTLDLSFNDFKGQITSSIEN), 144–170 (LSHLTYLDLSSNHFSGQILNSIGNLSR), 172–192 (TYLNLFDNQFSGQAPSSICNL), 193–216 (SHLTFLDLSYNRFFGQFPSSIGGL), 217–240 (SHLTTLSLFSNKFSGQIPSSIGNL), 241–266 (SNLTTLDLSNNNFSGQIPSFIGNLSQ), 268–287 (TFLGLFSNNFVGEIPSSFGN), 288–312 (LNQLTRLYVDDNKLSGNFPNVLLNL), 313–336 (TGLSLLSLSNNKFTGTLPPNITSL), 338–360 (NLMDFDASDNAFTGTFPSFLFTI), 361–384 (PSLTYIRLNGNQLKGTLEFGNISS), and 386–409 (SNLYELDIGNNNFIGPIPSSISKL). N-linked (GlcNAc...) asparagine glycans are attached at residues Asn-239, Asn-242, Asn-252, and Asn-263. 2 N-linked (GlcNAc...) asparagine glycosylation sites follow: Asn-311 and Asn-332. N-linked (GlcNAc...) asparagine glycosylation occurs at Asn-381. The LRR 13; degenerate repeat unit spans residues 412 to 433 (LFRLDISHLNTQGPVDFSIFSH). 16 LRR repeats span residues 434-458 (LKSLLDLNISHLNTTTRIDLNYFLS), 460-483 (FKRLLLLDLSGNHVSATNKSSVSD), 486-509 (SQLIQSLYLSGCGITEFPEFVRTQ), 510-533 (HELGFLDISNNKIKGQVPDWLWRL), 535-556 (ILYYVNLSNNTLIGFQRPSKPE), 558-580 (SLLYLLGSNNNFIGKIPSFICGL), 581-604 (RSLNTLDLSDNNFNGSIPRCMGHL), 605-629 (KSTLSVLNLRQNHLSGGLPKQIFEI), 631-651 (RSLDVGHNQLVGKLPRSLSFF), 652-674 (STLEVLNVESNRINDTFPFWLSS), 675-697 (LPKLQVLVLRSNAFHGPIHEATF), 698-721 (PELRIIDISHNRFNGTLPTEYFVK), 765-789 (LTIYTAVDFSGNRFEGEIPKSIGLL), 790-813 (KELLVLSLSNNAFSGHMPSSMGNL), 814-837 (TALESLDVSKNKLTGEIPQELGDL), and 839-862 (FLAYMNFSHNQLAGLVPGGQQFLT). N-linked (GlcNAc...) asparagine glycans are attached at residues Asn-441, Asn-446, and Asn-477. Asn-540 and Asn-543 each carry an N-linked (GlcNAc...) asparagine glycan. Asn-594 is a glycosylation site (N-linked (GlcNAc...) asparagine). N-linked (GlcNAc...) asparagine glycosylation is present at Asn-665. A glycan (N-linked (GlcNAc...) asparagine) is linked at Asn-711. Asn-812 is a glycosylation site (N-linked (GlcNAc...) asparagine). 2 N-linked (GlcNAc...) asparagine glycosylation sites follow: Asn-844 and Asn-864. A helical membrane pass occupies residues 911-931 (IAAAIGFGPGIAFGLMFGYIL). At 932–957 (VSYKPEWFMNPFDRNNRRQKRHKTTH) the chain is on the cytoplasmic side.

The protein belongs to the RLP family.

It is found in the cell membrane. The chain is Receptor-like protein 53 from Arabidopsis thaliana (Mouse-ear cress).